We begin with the raw amino-acid sequence, 331 residues long: Ketol-acid reductoisomerase (NADP(+)) (331 aa).

One can recognise a KARI N-terminal Rossmann domain in the interval 2–182 (AKLFYDSDAD…GGTRAGILET (181 aa)). Residues 25-28 (YGSQ), Ser51, Ser53, and 83-86 (DEFQ) contribute to the NADP(+) site. His108 is an active-site residue. Gly134 lines the NADP(+) pocket. Positions 183 to 328 (NFKEETETDL…KTLRSMFSWL (146 aa)) constitute a KARI C-terminal knotted domain. Asp191, Glu195, Glu227, and Glu231 together coordinate Mg(2+). Position 252 (Ser252) interacts with substrate.

This sequence belongs to the ketol-acid reductoisomerase family. It depends on Mg(2+) as a cofactor.

It catalyses the reaction (2R)-2,3-dihydroxy-3-methylbutanoate + NADP(+) = (2S)-2-acetolactate + NADPH + H(+). The catalysed reaction is (2R,3R)-2,3-dihydroxy-3-methylpentanoate + NADP(+) = (S)-2-ethyl-2-hydroxy-3-oxobutanoate + NADPH + H(+). It participates in amino-acid biosynthesis; L-isoleucine biosynthesis; L-isoleucine from 2-oxobutanoate: step 2/4. The protein operates within amino-acid biosynthesis; L-valine biosynthesis; L-valine from pyruvate: step 2/4. Functionally, involved in the biosynthesis of branched-chain amino acids (BCAA). Catalyzes an alkyl-migration followed by a ketol-acid reduction of (S)-2-acetolactate (S2AL) to yield (R)-2,3-dihydroxy-isovalerate. In the isomerase reaction, S2AL is rearranged via a Mg-dependent methyl migration to produce 3-hydroxy-3-methyl-2-ketobutyrate (HMKB). In the reductase reaction, this 2-ketoacid undergoes a metal-dependent reduction by NADPH to yield (R)-2,3-dihydroxy-isovalerate. In Prochlorococcus marinus (strain NATL2A), this protein is Ketol-acid reductoisomerase (NADP(+)).